The sequence spans 569 residues: MALIATKISSRSCFVSAYPNNSPTFLISKFPNTVDSLSPANTAKRSILRNVHASVSNPSKQFHNKTSLEYLHELNIKKIKNILSANVDVPSENLEMIDVIQSLGIDLHFRQEIEQTLHMIYKEGLQFNGDLHEIALRFRLLRQEGHYVQEIIFKNILDKKGGFKDVVKNDVKGLTELFEASELRVEGEETLDGAREFTYSRLNELCSGRESHQKQEIMKSLAQPRHKTVRGLTSKRFTSMIKIAGQEDPEWLQSLLRVAEIDSIRLKSLTQGEMSQTFKWWTELGLEKDVEKARSQPLKWHTWSMKILQDPTLTEQRLDLTKPISLVYVIDDIFDVYGELEELTIFTRVVERWDHKGLKTLPKYMRVCFEALDMITTEISMKIYKSHGWNPTYALRQSWASLCKAFLVEAKWFNSGYLPTTEEYMKNGVVSSGVHLVMLHAYILLGEELTKEKVELIESNPGIVSSAATILRLWDDLGSAKDENQDGTDGSYVECYLNEYKGSTVDEARTHVAQKISRAWKRLNRECLNPCPFSRSFSKACLNIARTVPLMYSYDDDQRLPDEYLKSLM.

Residues 1-39 (MALIATKISSRSCFVSAYPNNSPTFLISKFPNTVDSLSP) constitute a chloroplast transit peptide. Residues Arg-294, Asp-331, Asp-335, Arg-472, and Asp-475 each coordinate (2E)-geranyl diphosphate. Mg(2+) contacts are provided by Asp-331 and Asp-335. The DDXXD motif signature appears at 331–335 (DDIFD). Mg(2+)-binding residues include Asp-475, Ser-479, and Glu-483.

This sequence belongs to the terpene synthase family. Tpsb subfamily. Mg(2+) is required as a cofactor. The cofactor is Mn(2+). In terms of tissue distribution, predominantly expressed in flowers but also in stems and siliques.

It is found in the plastid. The protein resides in the chloroplast. The enzyme catalyses (2E)-geranyl diphosphate + H2O = (S)-linalool + diphosphate. The protein operates within secondary metabolite biosynthesis; terpenoid biosynthesis. Its function is as follows. Involved in monoterpene (C10) biosynthesis. The major product is (S)-linalool. In Arabidopsis thaliana (Mouse-ear cress), this protein is S-(+)-linalool synthase, chloroplastic.